Reading from the N-terminus, the 252-residue chain is Type I iodothyronine deiodinase (252 aa).

Residues 1 to 17 are Extracellular-facing; that stretch reads MESLLQTIKLMLRYIQK. The helical; Signal-anchor for type III membrane protein transmembrane segment at 18 to 38 threads the bilayer; that stretch reads ALILFFLFLYVVVGKVLMFLF. The Cytoplasmic segment spans residues 39 to 252; it reads PQTMASVLKS…EVCSVLEKKK (214 aa). The active site involves Sec-130. Sec-130 is a non-standard amino acid (selenocysteine).

The protein belongs to the iodothyronine deiodinase family. As to quaternary structure, predominantly monomer. Can form homodimers but homodimerization is not essential for enzyme activity.

Its subcellular location is the cell membrane. The protein localises to the endoplasmic reticulum membrane. It is found in the basolateral cell membrane. The enzyme catalyses 3,3',5-triiodo-L-thyronine + iodide + A + H(+) = L-thyroxine + AH2. The catalysed reaction is 3,3',5'-triiodo-L-thyronine + iodide + A + H(+) = L-thyroxine + AH2. It catalyses the reaction 3,3'-diiodo-L-thyronine + iodide + A + H(+) = 3,3',5'-triiodo-L-thyronine + AH2. It carries out the reaction 3,3'-diiodo-L-thyronine + iodide + A + H(+) = 3,3',5-triiodo-L-thyronine + AH2. The enzyme catalyses 3'-iodo-L-thyronine + iodide + A + H(+) = 3',5'-diiodo-L-thyronine + AH2. The catalysed reaction is 3-iodo-L-thyronine + iodide + A + H(+) = 3,5-diiodo-L-thyronine + AH2. It catalyses the reaction 3-iodo-L-thyronine + iodide + A + H(+) = 3,3'-diiodo-L-thyronine + AH2. It carries out the reaction 3,3'-diiodothyronamine + iodide + A + H(+) = 3,3',5'-triiodothyronamine + AH2. The enzyme catalyses 3'-iodothyronamine + iodide + A + H(+) = 3',5'-diiodothyronamine + AH2. The catalysed reaction is 3-iodothyronamine + iodide + A + H(+) = 3,3'-diiodothyronamine + AH2. It catalyses the reaction 3,3'-diiodothyronamine + iodide + A + H(+) = 3,3',5-triiodothyronamine + AH2. It carries out the reaction 3-iodothyronamine + iodide + A + H(+) = 3,5-diiodothyronamine + AH2. The enzyme catalyses 3,3'-diiodo-L-thyronine sulfate + iodide + A + H(+) = 3,3',5'-triiodo-L-thyronine sulfate + AH2. The catalysed reaction is 3,3',5'-triiodo-L-thyronine sulfate + iodide + A + H(+) = L-thyroxine sulfate + AH2. It catalyses the reaction 3,3'-diiodo-L-thyronine sulfate + iodide + A + H(+) = 3,3',5-triiodo-L-thyronine sulfate + AH2. With respect to regulation, lacks sensitivity to 6-n-propylthiouracil. Plays a crucial role in the metabolism of thyroid hormones (TH) and has specific roles in TH activation and inactivation by deiodination. Catalyzes the deiodination of L-thyroxine (T4) to 3,5,3'-triiodothyronine (T3) and 3,3',5'-triiodothyronine (rT3) to 3,3'-diiodothyronine (3,3'-T2) via outer-ring deiodination (ORD). Catalyzes the deiodiantion of T4 to rT3 and T3 to 3,3'-T2 via inner-ring deiodination (IRD). Catalyzes the deiodination of 3',5'-diiodothyronine (3',5'-T2) to 3'-monoiodothyronine (3'-T1) via ORD. Catalyzes the deiodination of 3,5-diiodothyronine (3,5-T2) to 3-monoiodothyronine (3-T1) and 3,3'-T2 to 3-T1 via IRD. Catalyzes the phenolic ring deiodinations of 3,3',5'-triiodothyronamine, 3',5'-diiodothyronamine and 3,3'-diiodothyronamine as well as tyrosyl ring deiodinations of 3,5,3'-triiodothyronamine and 3,5-diiodothyronamine. Catalyzes the deiodination of L-thyroxine sulfate and 3,3',5-triiodo-L-thyronine sulfate via IRD and of 3,3',5'-triiodo-L-thyronine sulfate via ORD. This is Type I iodothyronine deiodinase (dio1) from Xenopus laevis (African clawed frog).